The chain runs to 282 residues: CD320 antigen (282 aa).

The first 35 residues, 1 to 35 (MSGGWMAQVGAWRTGALGLALLLLLGLGLGLEAAA), serve as a signal peptide directing secretion. The Extracellular segment spans residues 36–229 (SPLSTPTSAQ…GDQSGSPTAY (194 aa)). One can recognise an LDL-receptor class A 1 domain in the interval 53–90 (SCPPTKFQCRTSGLCVPLTWRCDRDLDCSDGSDEEECR). 3 disulfide bridges follow: Cys54–Cys67, Cys61–Cys80, and Cys74–Cys89. Ca(2+) is bound by residues Trp72, Asp75, Asp77, Asp79, Asp85, and Glu86. Asn126 carries an N-linked (GlcNAc...) asparagine glycan. Residues 131–168 (ACLAGELRCTLSDDCIPLTWRCDGHPDCPDSSDELGCG) enclose the LDL-receptor class A 2 domain. 3 cysteine pairs are disulfide-bonded: Cys132/Cys145, Cys139/Cys158, and Cys152/Cys167. Ca(2+) contacts are provided by Trp150, Asp153, His155, Asp157, Asp163, and Glu164. Residues Asn195 and Asn213 are each glycosylated (N-linked (GlcNAc...) asparagine). The disordered stretch occupies residues 199 to 223 (MGPPVTLESVPSVGNATSSSAGDQS). Residues 210-223 (SVGNATSSSAGDQS) are compositionally biased toward polar residues. The chain crosses the membrane as a helical span at residues 230–250 (GVIAAAAVLSASLVTATLLLL). Over 251–282 (SWLRAQERLRPLGLLVAMKESLLLSEQKTSLP) the chain is Cytoplasmic.

In terms of assembly, interacts (via LDL-receptor class A domains) with TCN2. Detected in the germinal center (GC) of lymphoid follicles (at protein level). Expressed abundantly on follicular dendritic cells (FDCs).

Its subcellular location is the cell membrane. Functionally, receptor for transcobalamin saturated with cobalamin (TCbl). Plays an important role in cobalamin uptake. Plasma membrane protein that is expressed on follicular dendritic cells (FDC) and mediates interaction with germinal center B cells. Functions as costimulator to promote B cell responses to antigenic stimuli; promotes B cell differentiation and proliferation. Germinal center-B (GC-B) cells differentiate into memory B-cells and plasma cells (PC) through interaction with T-cells and follicular dendritic cells (FDC). CD320 augments the proliferation of PC precursors generated by IL-10. This is CD320 antigen (CD320) from Homo sapiens (Human).